Here is a 274-residue protein sequence, read N- to C-terminus: Orotidine 5'-phosphate decarboxylase (274 aa).

Catalysis depends on lysine 95, which acts as the Proton donor.

The protein belongs to the OMP decarboxylase family. Type 2 subfamily.

The enzyme catalyses orotidine 5'-phosphate + H(+) = UMP + CO2. It functions in the pathway pyrimidine metabolism; UMP biosynthesis via de novo pathway; UMP from orotate: step 2/2. This is Orotidine 5'-phosphate decarboxylase from Mycobacterium avium (strain 104).